The primary structure comprises 584 residues: Proteasome-associated ATPase (584 aa).

Residues Glu16–Pro91 adopt a coiled-coil conformation. Gly273–Leu278 is a binding site for ATP. The interval Tyr583 to Leu584 is docks into pockets in the proteasome alpha-ring.

This sequence belongs to the AAA ATPase family. In terms of assembly, homohexamer. Assembles into a hexameric ring structure that caps the 20S proteasome core. Strongly interacts with the prokaryotic ubiquitin-like protein Pup through a hydrophobic interface; the interacting region of ARC lies in its N-terminal coiled-coil domain. There is one Pup binding site per ARC hexamer ring. Upon ATP-binding, the C-terminus of ARC interacts with the alpha-rings of the proteasome core, possibly by binding to the intersubunit pockets.

The protein operates within protein degradation; proteasomal Pup-dependent pathway. In terms of biological role, ATPase which is responsible for recognizing, binding, unfolding and translocation of pupylated proteins into the bacterial 20S proteasome core particle. May be essential for opening the gate of the 20S proteasome via an interaction with its C-terminus, thereby allowing substrate entry and access to the site of proteolysis. Thus, the C-termini of the proteasomal ATPase may function like a 'key in a lock' to induce gate opening and therefore regulate proteolysis. In Nocardioides sp. (strain ATCC BAA-499 / JS614), this protein is Proteasome-associated ATPase.